Here is a 235-residue protein sequence, read N- to C-terminus: Keratin-associated protein 4-16 (235 aa).

The tract at residues 1–132 (MCSSKMPCSP…CCCPCCCLRP (132 aa)) is 16 X 5 AA repeats of C-C-[GIKRQVHEML]-[SPTRV]-[STVQRCP]. Repeat copies occupy residues 23 to 27 (CCHPS), 28 to 32 (CCQTT), 33 to 37 (CCRTT), 48 to 52 (CCRPQ), 53 to 57 (CCHSV), 58 to 62 (CCQPT), 63 to 67 (CCRPS), 68 to 72 (CCQTT), 78 to 82 (CCHPS), 83 to 87 (CCVSS), 88 to 92 (CCRPQ), 93 to 97 (CCHSV), 103 to 107 (CCHPS), 108 to 112 (CCISS), 118 to 122 (CCESS), and 128 to 132 (CCLRP). The span at 203 to 224 (SPSPSLPSLSPPLPSPPLPSPH) shows a compositional bias: pro residues. Residues 203-235 (SPSPSLPSLSPPLPSPPLPSPHFPSVNPKSMLQ) form a disordered region.

This sequence belongs to the KRTAP type 4 family. In terms of assembly, interacts with hair keratins.

In the hair cortex, hair keratin intermediate filaments are embedded in an interfilamentous matrix, consisting of hair keratin-associated proteins (KRTAP), which are essential for the formation of a rigid and resistant hair shaft through their extensive disulfide bond cross-linking with abundant cysteine residues of hair keratins. The matrix proteins include the high-sulfur and high-glycine-tyrosine keratins. The sequence is that of Keratin-associated protein 4-16 from Homo sapiens (Human).